The chain runs to 190 residues: Potassium-transporting ATPase KdpC subunit (190 aa).

The chain crosses the membrane as a helical span at residues 13 to 33 (LLLILTLITGILYPIVTTGFA).

It belongs to the KdpC family. The system is composed of three essential subunits: KdpA, KdpB and KdpC.

The protein localises to the cell inner membrane. In terms of biological role, part of the high-affinity ATP-driven potassium transport (or Kdp) system, which catalyzes the hydrolysis of ATP coupled with the electrogenic transport of potassium into the cytoplasm. This subunit acts as a catalytic chaperone that increases the ATP-binding affinity of the ATP-hydrolyzing subunit KdpB by the formation of a transient KdpB/KdpC/ATP ternary complex. The chain is Potassium-transporting ATPase KdpC subunit from Leptospira interrogans serogroup Icterohaemorrhagiae serovar copenhageni (strain Fiocruz L1-130).